Consider the following 345-residue polypeptide: MSSNSSLLVAVQLCYPNVNGSCVETLYSPGSRVILYIVFGFGAVLAVFGNLLVMISILHFKQLHSPTNFLVASLACADFLVGVTVMPFSMVRTVESCWYFGRSFCTFHTCCDVAFCYSSLFHLCFISIDRYIAVTDPLVYPTKFTVSVSGICISVSWILPLMYSGAVFYTGVYDDGLEELSDALNCIGGCQTVVNQNWVLIDCLSFFIPTFIMIILYGNIFLVARRQAKKIENTGSKTESSSESYKARVARRERKAAKTLGVTVVAFMISWLPYSIDSLIDAFMGFITPAYIYEICCWCAYYNSAMNPLIYALFYPWFRKAIKVIVTGQVLKNSSATMNLFSEHI.

Topologically, residues 1-32 (MSSNSSLLVAVQLCYPNVNGSCVETLYSPGSR) are extracellular. N-linked (GlcNAc...) asparagine glycans are attached at residues Asn4 and Asn19. Disulfide bonds link Cys22-Cys186 and Cys105-Cys190. Residues 33–53 (VILYIVFGFGAVLAVFGNLLV) traverse the membrane as a helical segment. At 54–68 (MISILHFKQLHSPTN) the chain is on the cytoplasmic side. Residues 69-89 (FLVASLACADFLVGVTVMPFS) form a helical membrane-spanning segment. Topologically, residues 90 to 107 (MVRTVESCWYFGRSFCTF) are extracellular. The helical transmembrane segment at 108–128 (HTCCDVAFCYSSLFHLCFISI) threads the bilayer. The Cytoplasmic segment spans residues 129–147 (DRYIAVTDPLVYPTKFTVS). Residues 148-168 (VSGICISVSWILPLMYSGAVF) form a helical membrane-spanning segment. Topologically, residues 169 to 202 (YTGVYDDGLEELSDALNCIGGCQTVVNQNWVLID) are extracellular. Residues 203–223 (CLSFFIPTFIMIILYGNIFLV) form a helical membrane-spanning segment. Residues 224-259 (ARRQAKKIENTGSKTESSSESYKARVARRERKAAKT) lie on the Cytoplasmic side of the membrane. Residues 260–276 (LGVTVVAFMISWLPYSI) traverse the membrane as a helical segment. Residues 277–282 (DSLIDA) are Extracellular-facing. The helical transmembrane segment at 283-302 (FMGFITPAYIYEICCWCAYY) threads the bilayer. Residues 303–345 (NSAMNPLIYALFYPWFRKAIKVIVTGQVLKNSSATMNLFSEHI) are Cytoplasmic-facing.

It belongs to the G-protein coupled receptor 1 family.

The protein resides in the cell membrane. Functionally, olfactory receptor specific for trace amines, such as beta-phenylethylamine (beta-PEA). Trace amine compounds are enriched in animal body fluids and act on trace amine-associated receptors (TAARs) to elicit both intraspecific and interspecific innate behaviors. Beta-PEA-binding causes a conformation change that triggers signaling via G(s)-class of G alpha proteins (GNAL or GNAS). The sequence is that of Trace amine-associated receptor 6 (TAAR6) from Pan troglodytes (Chimpanzee).